The following is a 487-amino-acid chain: MSETGSNEIKQWTLEPETEYRFELDPGTSLAIKLIQGNAEVFGAELAEGKHYLFGSECKAAVFTWQGCTIEMRHPSTEYVSEETPMAAYANLHIAFEQMRVRALAKFHGSPLPPGDEPPTAPEPPRVLVLGPENSGKTTVCKILTNYAVRAGQNWSPLLVNVDPSEGAWSAPGALSIAPVHGPIPTYSPANPLGSAATSAPMAMSSNALLPVVYWYGHPDTKRNPLLMDRLIRNLGENVNDRFELDQEGRSSGVIVDTPSSFASSSTSNDHRQKLIKACMDAFRINVILVVGHEKLNVEMQRAYSSYVTVVKIPKSGGVVELDHSYRERVHNYQLHTYMYGQVIQAPPGISNATLGGESLTDLVLSPSSSVIKFEDLSIFRIGAETMAPSSALPIGATRVVSEMQPVPVDPSQPGSGLLNAVLALLAPQNPDENERYDEEILDLTVSGFLIVTNLGMQQRKMTILAPNQGSVVGKTAIMGSFEWQEQ.

Residues Glu19, Lys59, and 134–139 (NSGKTT) contribute to the ATP site.

The protein belongs to the Clp1 family. Clp1 subfamily. As to quaternary structure, component of a pre-mRNA cleavage factor complex. Interacts directly with PCF11.

It is found in the nucleus. In terms of biological role, required for endonucleolytic cleavage during polyadenylation-dependent pre-mRNA 3'-end formation. The protein is mRNA cleavage and polyadenylation factor CLP1 of Laccaria bicolor (strain S238N-H82 / ATCC MYA-4686) (Bicoloured deceiver).